The primary structure comprises 488 residues: MTKYTEQEQIRRDKLEFYKKFDVVPFKKAYGLGKLSTSDELNKKYGQFAREELEAKKVKKNISGRLITARGPFLVLKDRKGTIQVYFNKKENPELTKIVETFDLGDILWVRGLLMKTHTGEMTVRAQDIQLLTKALKPLPDKFHGLTDTEERYRHRYLDLITNPESRNTFIMRTKIVQWIRDYFNKLDYLEAETPFLHDYLSGAAAKPFTTHHNSLNQDFVLRIATEIPLKKLVVGGFERVYEMGRIFRNEGYDTTHNPEFTTIEFYEAYSNVEGMMNRTETLIKELCKKIGKSKFVTNGVEVDLSKPFKRVNMIDEVSKKTGKNFRKITLEEAIEVAKAYKIKIEKFFTIGHIINALYEELVEPTLIQPTFLYGHPIEISPLSAKSDDPRFTERAELFINTKEYANMYTELSDPIDQLERFESQLEEKNKGNDEASDIDYDFVDALEYGMPPTGGCGIGIDRLVMLLTETDSIRDVLLFPTLKRIKK.

Glutamate 397 and glutamate 404 together coordinate Mg(2+).

The protein belongs to the class-II aminoacyl-tRNA synthetase family. In terms of assembly, homodimer. The cofactor is Mg(2+).

Its subcellular location is the cytoplasm. The enzyme catalyses tRNA(Lys) + L-lysine + ATP = L-lysyl-tRNA(Lys) + AMP + diphosphate. The chain is Lysine--tRNA ligase (lysS) from Mycoplasmopsis fermentans (strain ATCC 19989 / NBRC 14854 / NCTC 10117 / PG18) (Mycoplasma fermentans).